A 371-amino-acid polypeptide reads, in one-letter code: Pyruvate dehydrogenase E1 component subunit alpha (371 aa).

Heterodimer of an alpha and a beta chain. Thiamine diphosphate serves as cofactor.

It catalyses the reaction N(6)-[(R)-lipoyl]-L-lysyl-[protein] + pyruvate + H(+) = N(6)-[(R)-S(8)-acetyldihydrolipoyl]-L-lysyl-[protein] + CO2. The pyruvate dehydrogenase complex catalyzes the overall conversion of pyruvate to acetyl-CoA and CO(2). It contains multiple copies of three enzymatic components: pyruvate dehydrogenase (E1), dihydrolipoamide acetyltransferase (E2) and lipoamide dehydrogenase (E3). This chain is Pyruvate dehydrogenase E1 component subunit alpha, found in Bacillus cereus.